The primary structure comprises 585 residues: Beta-(1--&gt;2)glucan export ATP-binding/permease protein NdvA (585 aa).

Residues Val-21–Glu-301 enclose the ABC transmembrane type-1 domain. 6 helical membrane-spanning segments follow: residues Gly-22–Phe-42, Val-55–Leu-75, Gln-136–Val-156, Leu-158–Ser-178, Leu-245–Val-265, and Glu-269–Leu-289. An ABC transporter domain is found at Val-335–Ala-569. Gly-368 to Thr-375 is a binding site for ATP.

It belongs to the ABC transporter superfamily. Beta-(1--&gt;2)glucan exporter (TC 3.A.1.108.1) family. Homodimer.

It is found in the cell inner membrane. It carries out the reaction [(1-&gt;2)-beta-D-glucosyl](n)(in) + ATP + H2O = [(1-&gt;2)-beta-D-glucosyl](n)(out) + ADP + phosphate + H(+). In terms of biological role, involved in beta-(1--&gt;2)glucan export which is required for nodulation of legume roots. May be involved in other classes of oligosaccharides export. Transmembrane domains (TMD) form a pore in the inner membrane and the ATP-binding domain (NBD) is responsible for energy generation. This is Beta-(1--&gt;2)glucan export ATP-binding/permease protein NdvA from Rhizobium meliloti (strain 1021) (Ensifer meliloti).